The primary structure comprises 808 residues: Anaphase-promoting complex subunit 4 (808 aa).

Tyr-469 carries the phosphotyrosine modification. A phosphoserine mark is found at Ser-757 and Ser-758. Lys-772 is covalently cross-linked (Glycyl lysine isopeptide (Lys-Gly) (interchain with G-Cter in SUMO2)). Phosphoserine is present on residues Ser-777 and Ser-779. Lys-798 participates in a covalent cross-link: Glycyl lysine isopeptide (Lys-Gly) (interchain with G-Cter in SUMO2).

Belongs to the APC4 family. In terms of assembly, the mammalian APC/C is composed at least of 14 distinct subunits ANAPC1, ANAPC2, CDC27/APC3, ANAPC4, ANAPC5, CDC16/APC6, ANAPC7, CDC23/APC8, ANAPC10, ANAPC11, CDC26/APC12, ANAPC13, ANAPC15 and ANAPC16 that assemble into a complex of at least 19 chains with a combined molecular mass of around 1.2 MDa; APC/C interacts with FZR1 and FBXO5. In the context of the APC/C complex, directly interacts with UBE2S. Interacts with FBXO43.

It localises to the nucleus. Its pathway is protein modification; protein ubiquitination. Functionally, component of the anaphase promoting complex/cyclosome (APC/C), a cell cycle-regulated E3 ubiquitin ligase that controls progression through mitosis and the G1 phase of the cell cycle. The APC/C complex acts by mediating ubiquitination and subsequent degradation of target proteins: it mainly mediates the formation of 'Lys-11'-linked polyubiquitin chains and, to a lower extent, the formation of 'Lys-48'- and 'Lys-63'-linked polyubiquitin chains. The APC/C complex catalyzes assembly of branched 'Lys-11'-/'Lys-48'-linked branched ubiquitin chains on target proteins. This chain is Anaphase-promoting complex subunit 4 (ANAPC4), found in Homo sapiens (Human).